Here is a 251-residue protein sequence, read N- to C-terminus: Triosephosphate isomerase (251 aa).

9–11 (NWK) provides a ligand contact to substrate. The active-site Electrophile is the His94. The active-site Proton acceptor is Glu166. Substrate-binding positions include Gly172, Ser211, and 232–233 (GG).

It belongs to the triosephosphate isomerase family. Homodimer.

It is found in the cytoplasm. The enzyme catalyses D-glyceraldehyde 3-phosphate = dihydroxyacetone phosphate. It functions in the pathway carbohydrate biosynthesis; gluconeogenesis. The protein operates within carbohydrate degradation; glycolysis; D-glyceraldehyde 3-phosphate from glycerone phosphate: step 1/1. Involved in the gluconeogenesis. Catalyzes stereospecifically the conversion of dihydroxyacetone phosphate (DHAP) to D-glyceraldehyde-3-phosphate (G3P). This chain is Triosephosphate isomerase, found in Xanthomonas axonopodis pv. citri (strain 306).